The chain runs to 416 residues: Tyrosine--tRNA ligase (416 aa).

Residue Tyr40 participates in L-tyrosine binding. Residues 45 to 54 carry the 'HIGH' region motif; the sequence is ATAKSLHVGS. Tyr177 and Gln181 together coordinate L-tyrosine. Residues 237-241 carry the 'KMSKS' region motif; that stretch reads KMGKS. Lys240 contributes to the ATP binding site. In terms of domain architecture, S4 RNA-binding spans 351 to 415; the sequence is ISIVQLIVKS…GKKRHAMVQL (65 aa).

It belongs to the class-I aminoacyl-tRNA synthetase family. TyrS type 1 subfamily. Homodimer.

The protein resides in the cytoplasm. It catalyses the reaction tRNA(Tyr) + L-tyrosine + ATP = L-tyrosyl-tRNA(Tyr) + AMP + diphosphate + H(+). In terms of biological role, catalyzes the attachment of tyrosine to tRNA(Tyr) in a two-step reaction: tyrosine is first activated by ATP to form Tyr-AMP and then transferred to the acceptor end of tRNA(Tyr). The chain is Tyrosine--tRNA ligase from Roseobacter denitrificans (strain ATCC 33942 / OCh 114) (Erythrobacter sp. (strain OCh 114)).